Consider the following 518-residue polypeptide: Two-component response regulator-like PRR1 (518 aa).

One can recognise a Response regulatory domain in the interval 29 to 147; it reads RILLCDSDPS…ELLNLWTHVW (119 aa). Disordered regions lie at residues 172 to 241, 266 to 305, and 483 to 518; these read PSDA…PGVM, TPTT…GTDV, and VRQA…SSPE. The span at 196-212 shows a compositional bias: polar residues; the sequence is NQETSTSNQHEYESNPS. Positions 443–485 constitute a CCT domain; the sequence is RAAALAKFRLKRKERCFDKKVRYVNRKKLAETRPRVRGQFVRQ.

The protein belongs to the ARR-like family. Interacts with PIL13. Interacts with PIL15.

It is found in the nucleus. Controls photoperiodic flowering response. Seems to be one of the component of the circadian clock. Expression of several members of the ARR-like family is controlled by circadian rhythm. The particular coordinated sequential expression of PRR73, PRR37, PRR95, PRR59 and PPR1 result to circadian waves that may be at the basis of the endogenous circadian clock. The polypeptide is Two-component response regulator-like PRR1 (PRR1) (Oryza sativa subsp. japonica (Rice)).